Reading from the N-terminus, the 217-residue chain is Nucleoside diphosphate-linked moiety X motif 6 (217 aa).

In terms of domain architecture, Nudix hydrolase spans 42 to 177 (THQVGVAGAV…VAKLLLYGYN (136 aa)). The Nudix box signature appears at 77–98 (GLSDQGEDIGATAVREVLEETG).

Belongs to the Nudix hydrolase family. Detected in liver (at protein level).

Its subcellular location is the cytoplasm. It localises to the nucleus. It is found in the mitochondrion. Functionally, may contribute to the regulation of cell proliferation. The sequence is that of Nucleoside diphosphate-linked moiety X motif 6 (nudt6) from Xenopus laevis (African clawed frog).